A 256-amino-acid chain; its full sequence is Glutamate racemase (256 aa).

Substrate is bound by residues 11-12 (DS) and 43-44 (YG). The active-site Proton donor/acceptor is Cys74. A substrate-binding site is contributed by 75–76 (NT). Cys182 (proton donor/acceptor) is an active-site residue. 183-184 (TH) provides a ligand contact to substrate.

The protein belongs to the aspartate/glutamate racemases family.

The enzyme catalyses L-glutamate = D-glutamate. It functions in the pathway cell wall biogenesis; peptidoglycan biosynthesis. Provides the (R)-glutamate required for cell wall biosynthesis. This is Glutamate racemase from Leptospira interrogans serogroup Icterohaemorrhagiae serovar copenhageni (strain Fiocruz L1-130).